Reading from the N-terminus, the 482-residue chain is Membrane-bound lytic murein transglycosylase F (482 aa).

The first 18 residues, 1 to 18 (MKGLFIRIVLAICLSLWA), serve as a signal peptide directing secretion. The non-LT domain stretch occupies residues 19–266 (IDMVFPWQQI…RIEEKYFNHL (248 aa)). The segment at 267-482 (NQFDYVDTRS…ISTQTQQEQR (216 aa)) is LT domain. Glu311 is an active-site residue.

It in the N-terminal section; belongs to the bacterial solute-binding protein 3 family. This sequence in the C-terminal section; belongs to the transglycosylase Slt family.

It is found in the cell outer membrane. The enzyme catalyses Exolytic cleavage of the (1-&gt;4)-beta-glycosidic linkage between N-acetylmuramic acid (MurNAc) and N-acetylglucosamine (GlcNAc) residues in peptidoglycan, from either the reducing or the non-reducing ends of the peptidoglycan chains, with concomitant formation of a 1,6-anhydrobond in the MurNAc residue.. Functionally, murein-degrading enzyme that degrades murein glycan strands and insoluble, high-molecular weight murein sacculi, with the concomitant formation of a 1,6-anhydromuramoyl product. Lytic transglycosylases (LTs) play an integral role in the metabolism of the peptidoglycan (PG) sacculus. Their lytic action creates space within the PG sacculus to allow for its expansion as well as for the insertion of various structures such as secretion systems and flagella. This is Membrane-bound lytic murein transglycosylase F from Histophilus somni (strain 129Pt) (Haemophilus somnus).